Reading from the N-terminus, the 88-residue chain is MANSPQAKKRARQNDKARAHNASLRSMVRTYLKKVVAAIEAGDAEAAKKAYVAAVPVIDRMADKGIIHKNKAARHKSRLNAQIKGLAA.

The tract at residues 1–23 (MANSPQAKKRARQNDKARAHNAS) is disordered.

The protein belongs to the bacterial ribosomal protein bS20 family.

Functionally, binds directly to 16S ribosomal RNA. The sequence is that of Small ribosomal subunit protein bS20 from Teredinibacter turnerae (strain ATCC 39867 / T7901).